The primary structure comprises 72 residues: Translation initiation factor IF-1 (72 aa).

In terms of domain architecture, S1-like spans 1–72 (MTKEEVLEFP…TKGRITYRFK (72 aa)).

Belongs to the IF-1 family. As to quaternary structure, component of the 30S ribosomal translation pre-initiation complex which assembles on the 30S ribosome in the order IF-2 and IF-3, IF-1 and N-formylmethionyl-tRNA(fMet); mRNA recruitment can occur at any time during PIC assembly.

It localises to the cytoplasm. In terms of biological role, one of the essential components for the initiation of protein synthesis. Stabilizes the binding of IF-2 and IF-3 on the 30S subunit to which N-formylmethionyl-tRNA(fMet) subsequently binds. Helps modulate mRNA selection, yielding the 30S pre-initiation complex (PIC). Upon addition of the 50S ribosomal subunit IF-1, IF-2 and IF-3 are released leaving the mature 70S translation initiation complex. The chain is Translation initiation factor IF-1 from Agrobacterium fabrum (strain C58 / ATCC 33970) (Agrobacterium tumefaciens (strain C58)).